The following is a 119-amino-acid chain: uncharacterized protein (119 aa).

The N-terminal stretch at 1 to 30 (MCPECFFLMLCFCGYCSSSSSSFRSSPVYG) is a signal peptide.

This is an uncharacterized protein from Escherichia coli (strain UTI89 / UPEC).